Reading from the N-terminus, the 211-residue chain is Metalloproteinase inhibitor 3 (211 aa).

An N-terminal signal peptide occupies residues 1-23 (MTPWLGLVVLLGSWSLGDWGAEA). Cys24 lines the Zn(2+) pocket. Involved in metalloproteinase-binding regions lie at residues 24–27 (CTCS) and 88–89 (ES). Intrachain disulfides connect Cys24–Cys91, Cys26–Cys118, Cys36–Cys143, Cys145–Cys192, Cys150–Cys155, and Cys163–Cys184. The 120-residue stretch at 24-143 (CTCSPSHPQD…GLNYRYHLGC (120 aa)) folds into the NTR domain. The mediates interaction with EFEMP1 stretch occupies residues 105 to 188 (TGRVYDGKMY…SKHYACIRQK (84 aa)). A glycan (N-linked (GlcNAc...) asparagine) is linked at Asn207.

It belongs to the protease inhibitor I35 (TIMP) family. As to quaternary structure, interacts with EFEMP1. Interacts with KDR.

The protein resides in the secreted. The protein localises to the extracellular space. It is found in the extracellular matrix. Functionally, mediates a variety of processes including matrix regulation and turnover, inflammation, and angiogenesis, through reversible inhibition of zinc protease superfamily enzymes, primarily matrix metalloproteinases (MMPs). Regulates extracellular matrix (ECM) remodeling through inhibition of matrix metalloproteinases (MMP) including MMP-1, MMP-2, MMP-3, MMP-7, MMP-9, MMP-13, MMP-14 and MMP-15. Additionally, modulates the processing of amyloid precursor protein (APP) and apolipoprotein E receptor ApoER2 by inhibiting two alpha-secretases ADAM10 and ADAM17. Functions as a tumor suppressor and a potent inhibitor of angiogenesis. Exerts its anti-angiogenic effect by directly interacting with vascular endothelial growth factor (VEGF) receptor-2/KDR, preventing its binding to the VEGFA ligand. Selectively induces apoptosis in angiogenic endothelial cells through a caspase-independent cell death pathway. Mechanistically, inhibits matrix-induced focal adhesion kinase PTK2 tyrosine phosphorylation and association with paxillin/PXN and disrupts the incorporation of ITGB3, PTK2 and PXN into focal adhesion contacts on the matrix. The polypeptide is Metalloproteinase inhibitor 3 (TIMP3) (Equus caballus (Horse)).